A 558-amino-acid polypeptide reads, in one-letter code: CTP synthase (558 aa).

Residues 1–270 (MTKYVFVTGG…DDLICRELDL (270 aa)) are amidoligase domain. Ser-13 lines the CTP pocket. Position 13 (Ser-13) interacts with UTP. ATP-binding positions include 14–19 (SLGKGI) and Asp-71. Mg(2+) is bound by residues Asp-71 and Glu-144. CTP contacts are provided by residues 151–153 (DIE), 191–196 (KTKPTQ), and Lys-227. Residues 191–196 (KTKPTQ) and Lys-227 each bind UTP. In terms of domain architecture, Glutamine amidotransferase type-1 spans 295–547 (TIGMVGKYVE…ISAALEHQKK (253 aa)). Gly-356 serves as a coordination point for L-glutamine. Residue Cys-383 is the Nucleophile; for glutamine hydrolysis of the active site. Residues 384-387 (LGMQ), Glu-407, and Arg-473 each bind L-glutamine. Catalysis depends on residues His-520 and Glu-522.

The protein belongs to the CTP synthase family. In terms of assembly, homotetramer.

It catalyses the reaction UTP + L-glutamine + ATP + H2O = CTP + L-glutamate + ADP + phosphate + 2 H(+). The catalysed reaction is L-glutamine + H2O = L-glutamate + NH4(+). The enzyme catalyses UTP + NH4(+) + ATP = CTP + ADP + phosphate + 2 H(+). Its pathway is pyrimidine metabolism; CTP biosynthesis via de novo pathway; CTP from UDP: step 2/2. Allosterically activated by GTP, when glutamine is the substrate; GTP has no effect on the reaction when ammonia is the substrate. The allosteric effector GTP functions by stabilizing the protein conformation that binds the tetrahedral intermediate(s) formed during glutamine hydrolysis. Inhibited by the product CTP, via allosteric rather than competitive inhibition. In terms of biological role, catalyzes the ATP-dependent amination of UTP to CTP with either L-glutamine or ammonia as the source of nitrogen. Regulates intracellular CTP levels through interactions with the four ribonucleotide triphosphates. In Polynucleobacter necessarius subsp. necessarius (strain STIR1), this protein is CTP synthase.